We begin with the raw amino-acid sequence, 358 residues long: DNA integrity scanning protein DisA (358 aa).

A DAC domain is found at 9–147; it reads KQDLSEILQF…ENMKYILKDI (139 aa). ATP contacts are provided by residues glycine 76, leucine 94, and 107 to 111; that span reads MRHRT.

It belongs to the DisA family. In terms of assembly, homooctamer. The cofactor is Mg(2+).

The catalysed reaction is 2 ATP = 3',3'-c-di-AMP + 2 diphosphate. Participates in a DNA-damage check-point that is active prior to asymmetric division when DNA is damaged. DisA forms globular foci that rapidly scan along the chromosomes during sporulation, searching for lesions. When a lesion is present, DisA pauses at the lesion site. This triggers a cellular response that culminates in a temporary block in sporulation initiation. Its function is as follows. Also has diadenylate cyclase activity, catalyzing the condensation of 2 ATP molecules into cyclic di-AMP (c-di-AMP). c-di-AMP acts as a signaling molecule that couples DNA integrity with progression of sporulation. The rise in c-di-AMP level generated by DisA while scanning the chromosome, operates as a positive signal that advances sporulation; upon encountering a lesion, the DisA focus arrests at the damaged site and halts c-di-AMP synthesis. This is DNA integrity scanning protein DisA from Bacillus licheniformis (strain ATCC 14580 / DSM 13 / JCM 2505 / CCUG 7422 / NBRC 12200 / NCIMB 9375 / NCTC 10341 / NRRL NRS-1264 / Gibson 46).